The sequence spans 380 residues: Queuine tRNA-ribosyltransferase (380 aa).

The Proton acceptor role is filled by D96. Residues 96 to 100 (DSGGF), D150, Q193, and G220 contribute to the substrate site. Residues 251 to 257 (GVGAPDS) are RNA binding. Residue D270 is the Nucleophile of the active site. Residues 275–279 (TRIAR) form an RNA binding; important for wobble base 34 recognition region. 4 residues coordinate Zn(2+): C308, C310, C313, and H339.

Belongs to the queuine tRNA-ribosyltransferase family. As to quaternary structure, homodimer. Within each dimer, one monomer is responsible for RNA recognition and catalysis, while the other monomer binds to the replacement base PreQ1. Zn(2+) is required as a cofactor.

The catalysed reaction is 7-aminomethyl-7-carbaguanine + guanosine(34) in tRNA = 7-aminomethyl-7-carbaguanosine(34) in tRNA + guanine. It participates in tRNA modification; tRNA-queuosine biosynthesis. In terms of biological role, catalyzes the base-exchange of a guanine (G) residue with the queuine precursor 7-aminomethyl-7-deazaguanine (PreQ1) at position 34 (anticodon wobble position) in tRNAs with GU(N) anticodons (tRNA-Asp, -Asn, -His and -Tyr). Catalysis occurs through a double-displacement mechanism. The nucleophile active site attacks the C1' of nucleotide 34 to detach the guanine base from the RNA, forming a covalent enzyme-RNA intermediate. The proton acceptor active site deprotonates the incoming PreQ1, allowing a nucleophilic attack on the C1' of the ribose to form the product. After dissociation, two additional enzymatic reactions on the tRNA convert PreQ1 to queuine (Q), resulting in the hypermodified nucleoside queuosine (7-(((4,5-cis-dihydroxy-2-cyclopenten-1-yl)amino)methyl)-7-deazaguanosine). This Streptococcus pneumoniae (strain ATCC BAA-255 / R6) protein is Queuine tRNA-ribosyltransferase.